The sequence spans 126 residues: MRHRKSGRQLNRNSSHRKAMFSNMASSLVRHEVIKTTLPKAKELRRVVEPLITLAKTDSVANRRLAFARTRDNEVVAKLFNELGPRFAARQGGYTRILKAGFRAGDKAPMAYIELVDRPAAEEAAE.

This sequence belongs to the bacterial ribosomal protein bL17 family. As to quaternary structure, part of the 50S ribosomal subunit. Contacts protein L32.

The sequence is that of Large ribosomal subunit protein bL17 from Vibrio parahaemolyticus serotype O3:K6 (strain RIMD 2210633).